The primary structure comprises 454 residues: Glycosyl hydrolase family 109 protein (454 aa).

The tat-type signal signal peptide spans 1–29 (MFAMKRREFIAASAAVAASSLLPQTPAWA). NAD(+) contacts are provided by residues 43-44 (MR), Asp-65, 116-119 (WEYH), 136-137 (EV), and Asn-165. Tyr-194 lines the substrate pocket. Residue 224–228 (SEARW) coordinates NAD(+). Substrate is bound by residues Arg-229, 241–244 (YPSH), and Tyr-324. Tyr-241 contributes to the NAD(+) binding site.

It belongs to the Gfo/Idh/MocA family. Glycosyl hydrolase 109 subfamily. NAD(+) is required as a cofactor. Post-translationally, predicted to be exported by the Tat system. The position of the signal peptide cleavage has not been experimentally proven.

Glycosidase. This is Glycosyl hydrolase family 109 protein from Stenotrophomonas maltophilia (strain K279a).